Reading from the N-terminus, the 286-residue chain is Tryptophan 2,3-dioxygenase (286 aa).

Residues 55-59 (FIIIH), Tyr117, and Arg121 contribute to the substrate site. His244 serves as a coordination point for heme. Thr258 contacts substrate.

This sequence belongs to the tryptophan 2,3-dioxygenase family. In terms of assembly, homotetramer. Requires heme as cofactor.

The enzyme catalyses L-tryptophan + O2 = N-formyl-L-kynurenine. It participates in amino-acid degradation; L-tryptophan degradation via kynurenine pathway; L-kynurenine from L-tryptophan: step 1/2. Its function is as follows. Heme-dependent dioxygenase that catalyzes the oxidative cleavage of the L-tryptophan (L-Trp) pyrrole ring and converts L-tryptophan to N-formyl-L-kynurenine. Catalyzes the oxidative cleavage of the indole moiety. The chain is Tryptophan 2,3-dioxygenase from Shewanella woodyi (strain ATCC 51908 / MS32).